The following is a 190-amino-acid chain: Cysteine dioxygenase (190 aa).

Residues H78, H80, and H132 each coordinate Fe cation. The 3'-(S-cysteinyl)-tyrosine (Cys-Tyr) cross-link spans C85 to Y149.

Belongs to the cysteine dioxygenase family. The cofactor is Fe cation. Post-translationally, the thioether cross-link between Cys-85 and Tyr-149 plays a structural role through stabilizing the Fe(2+) ion, and prevents the production of highly damaging free hydroxyl radicals by holding the oxygen radical via hydroxyl hydrogen.

The catalysed reaction is L-cysteine + O2 = 3-sulfino-L-alanine + H(+). It participates in organosulfur biosynthesis; taurine biosynthesis; hypotaurine from L-cysteine: step 1/2. This Caenorhabditis briggsae protein is Cysteine dioxygenase (cdo-1).